A 188-amino-acid chain; its full sequence is CASP-like protein 4B3 (188 aa).

The segment at 1-21 (MSFSPASSEPHDAPAAAGSSV) is disordered. At 1 to 42 (MSFSPASSEPHDAPAAAGSSVPASRSIAERWKMEAAPIRARL) the chain is on the cytoplasmic side. The chain crosses the membrane as a helical span at residues 43–63 (LLRAFAWLFSLLALVVMATDV). Topologically, residues 64–76 (HGRGGAQDFSTYP) are extracellular. A helical transmembrane segment spans residues 77–97 (EYNYCLGMSIIALLYATAQLV). Residues 98–114 (RDAHRLSSGRDLVAGRK) are Cytoplasmic-facing. A helical membrane pass occupies residues 115–135 (AAAVVDFAGDQVVAYSLISGL). At 136-156 (SAAAPVTDYMRQATDNLFNDS) the chain is on the extracellular side. N154 carries an N-linked (GlcNAc...) asparagine glycan. A helical transmembrane segment spans residues 157–177 (AAAAISLAFFAFLAISLSALI). Topologically, residues 178 to 188 (SGYNLSLEAIV) are cytoplasmic.

Belongs to the Casparian strip membrane proteins (CASP) family. Homodimer and heterodimers.

It localises to the cell membrane. This is CASP-like protein 4B3 from Hordeum vulgare subsp. vulgare (Domesticated barley).